The primary structure comprises 143 residues: MFLGSHTPRLDDKGRLTLPAKFRDELEGGLVITKGQERCLYVFPMAEFTRISESLRTAPVTAKALRDYSRVFFSSAADDAPDRQGRITIPAPLRTYAGLTRDCVVNGANTRVEIWDAQRWQAYLESQEESFAELSEEVLPGVI.

2 consecutive SpoVT-AbrB domains span residues 5 to 47 and 76 to 119; these read SHTP…PMAE and AADD…DAQR.

It belongs to the MraZ family. In terms of assembly, forms oligomers.

It localises to the cytoplasm. The protein localises to the nucleoid. The chain is Transcriptional regulator MraZ from Frankia alni (strain DSM 45986 / CECT 9034 / ACN14a).